Consider the following 456-residue polypeptide: Phosphomethylpyrimidine synthase (456 aa).

Residues Asn-80, Met-109, Tyr-139, His-175, 195 to 197 (SRG), 236 to 239 (DSLR), and Glu-275 contribute to the substrate site. His-279 contacts Zn(2+). Tyr-302 serves as a coordination point for substrate. His-343 contacts Zn(2+). Residues Cys-423, Cys-426, and Cys-431 each contribute to the [4Fe-4S] cluster site.

It belongs to the ThiC family. [4Fe-4S] cluster serves as cofactor.

The enzyme catalyses 5-amino-1-(5-phospho-beta-D-ribosyl)imidazole + S-adenosyl-L-methionine = 4-amino-2-methyl-5-(phosphooxymethyl)pyrimidine + CO + 5'-deoxyadenosine + formate + L-methionine + 3 H(+). It functions in the pathway cofactor biosynthesis; thiamine diphosphate biosynthesis. Its function is as follows. Catalyzes the synthesis of the hydroxymethylpyrimidine phosphate (HMP-P) moiety of thiamine from aminoimidazole ribotide (AIR) in a radical S-adenosyl-L-methionine (SAM)-dependent reaction. This chain is Phosphomethylpyrimidine synthase, found in Prochlorococcus marinus (strain MIT 9515).